The following is a 559-amino-acid chain: Transcription activator of gluconeogenesis ERT1-2 (559 aa).

Residues 23–51 constitute a DNA-binding region (zn(2)-C6 fungal-type); that stretch reads CIHCQRTHLTCDNNRPCERCVARGFADTC. Disordered regions lie at residues 63 to 159, 231 to 263, and 329 to 349; these read DDKE…TPSQ, SNSL…TPSA, and AGQP…DSPS. Composition is skewed to low complexity over residues 139-159 and 231-244; these read QGPQ…TPSQ and SNSL…QSPN. Residues 245–260 are compositionally biased toward polar residues; it reads THSPHNQDQPTPQAAT. Residues 440-512 form the PAS domain; the sequence is ALLEYQKFIS…ELFSRIAFGD (73 aa).

It belongs to the ERT1/acuK family.

It is found in the nucleus. Functionally, transcription factor which regulates nonfermentable carbon utilization. Activator of gluconeogenetic genes. The polypeptide is Transcription activator of gluconeogenesis ERT1-2 (ERT1-2) (Yarrowia lipolytica (strain CLIB 122 / E 150) (Yeast)).